Consider the following 518-residue polypeptide: Nitrogenase iron-iron protein alpha chain (518 aa).

Residues Cys-49, Cys-75, and Cys-138 each coordinate [8Fe-7S] cluster. Positions 257 and 423 each coordinate [8Fe-9S-C-homocitryl] cluster.

The protein belongs to the NifD/NifK/NifE/NifN family. In terms of assembly, hexamer of two alpha, two beta, and two delta chains. Requires [8Fe-7S] cluster as cofactor. [8Fe-9S-C-homocitryl] cluster is required as a cofactor.

The catalysed reaction is N2 + 8 reduced [2Fe-2S]-[ferredoxin] + 16 ATP + 16 H2O = H2 + 8 oxidized [2Fe-2S]-[ferredoxin] + 2 NH4(+) + 16 ADP + 16 phosphate + 6 H(+). Functionally, this iron-iron protein is part of the nitrogenase complex that catalyzes the key enzymatic reactions in nitrogen fixation. Other nitrogenase complexes utilize a molybdenum-iron protein or a vanadium-iron protein. This Azotobacter vinelandii protein is Nitrogenase iron-iron protein alpha chain (anfD).